The sequence spans 508 residues: Cytochrome P450 monooxygenase tenA (508 aa).

Residues 8-24 (VSLPYLILSACLSVILL) form a helical membrane-spanning segment. Position 456 (Cys456) interacts with heme.

It belongs to the cytochrome P450 family. Heme is required as a cofactor.

The protein resides in the membrane. It participates in secondary metabolite biosynthesis. In terms of biological role, cytochrome P450 monooxygenase; part of the gene cluster that mediates the biosynthesis of tenellin-type 2-pyridones, iron-chelating compounds involved in iron stress tolerance, competition with the natural competitor fungus Metarhizium robertsii and insect hosts infection. TenA catalyzes an oxidative ring expansion of pretenellin A and 14-hydropretellenin A to form the 2-pyridone core, leading to the production of pretenellin B and pyridovericin, respectively. The pathway begins with the assembly of the polyketide-amino acid backbone by the hybrid PKS-NRPS tenS with the help of the enoyl reductase tenC. These enzymes catalyze the synthesis of the pyrrolidine-2-dione intermediates pretellinin A, 11-hydropretellenin A, 12-hydropretellenin A, 13-hydropretellenin A, 14-hydropretellenin A, 12-oxopretellenin A and prototellinin D. The cytochrome P450 monooxygenase tenA then catalyzes an oxidative ring expansion of pretenellin A and 14-hydropretellenin A to form the 2-pyridone core, leading to pretenellin B and pyridovericin, respectively. The cytochrome P450 monooxygenase tenB is then required for the selective N-hydroxylation of the 2-pyridone nitrogen of yield tellinin and 15-hydroxytellenin (15-HT), respectively. The UDP-glucosyltransferase GT1 and the methyltransferase MT1, located outside the tenS gene cluster, contribute to the stepwise glycosylation and methylation of 15-HT to obtain the glycoside pyridovericin-N-O-(4-O-methyl-beta-D-glucopyranoside) (PMGP). Additional related compounds such as 1-O-methyl-15-HT, (8Z)-1-O-methyl-15-HT, and O-methyltenellin A are also produced but the enzymes involved in their biosynthesis have still to be determined. The polypeptide is Cytochrome P450 monooxygenase tenA (Beauveria bassiana (White muscardine disease fungus)).